The chain runs to 115 residues: NADH-ubiquinone oxidoreductase chain 3 (115 aa).

A run of 3 helical transmembrane segments spans residues 4 to 24 (LMIL…AFWL), 55 to 75 (FFLV…LLPL), and 84 to 104 (INMM…GLAY).

The protein belongs to the complex I subunit 3 family. As to quaternary structure, core subunit of respiratory chain NADH dehydrogenase (Complex I) which is composed of 45 different subunits. Interacts with TMEM186. Interacts with TMEM242.

It is found in the mitochondrion inner membrane. The catalysed reaction is a ubiquinone + NADH + 5 H(+)(in) = a ubiquinol + NAD(+) + 4 H(+)(out). Functionally, core subunit of the mitochondrial membrane respiratory chain NADH dehydrogenase (Complex I) which catalyzes electron transfer from NADH through the respiratory chain, using ubiquinone as an electron acceptor. Essential for the catalytic activity of complex I. This is NADH-ubiquinone oxidoreductase chain 3 from Podomys floridanus (Florida mouse).